The following is a 258-amino-acid chain: Spectinomycin 9-adenylyltransferase (258 aa).

The enzyme catalyses spectinomycin + ATP = 9-O-adenylylspectinomycin + diphosphate. In terms of biological role, mediates bacterial resistance to spectinomycin, is probably a spectinomycin 9-adenylyltransferase. In Campylobacter jejuni, this protein is Spectinomycin 9-adenylyltransferase.